The following is a 204-amino-acid chain: WW domain-containing protein C11B10.08 (204 aa).

Residues E7–R43 enclose the WW domain. The interval P32–P117 is disordered. 2 stretches are compositionally biased toward low complexity: residues Y66–P100 and G108–P117.

Its subcellular location is the cytoplasm. It is found in the nucleus. The chain is WW domain-containing protein C11B10.08 from Schizosaccharomyces pombe (strain 972 / ATCC 24843) (Fission yeast).